The chain runs to 373 residues: UDP-N-acetylglucosamine--N-acetylmuramyl-(pentapeptide) pyrophosphoryl-undecaprenol N-acetylglucosamine transferase (373 aa).

Residues 14–16, asparagine 128, arginine 165, serine 199, and glutamine 295 each bind UDP-N-acetyl-alpha-D-glucosamine; that span reads TAG.

Belongs to the glycosyltransferase 28 family. MurG subfamily.

It is found in the cell membrane. The enzyme catalyses di-trans,octa-cis-undecaprenyl diphospho-N-acetyl-alpha-D-muramoyl-L-alanyl-D-glutamyl-meso-2,6-diaminopimeloyl-D-alanyl-D-alanine + UDP-N-acetyl-alpha-D-glucosamine = di-trans,octa-cis-undecaprenyl diphospho-[N-acetyl-alpha-D-glucosaminyl-(1-&gt;4)]-N-acetyl-alpha-D-muramoyl-L-alanyl-D-glutamyl-meso-2,6-diaminopimeloyl-D-alanyl-D-alanine + UDP + H(+). Its pathway is cell wall biogenesis; peptidoglycan biosynthesis. Cell wall formation. Catalyzes the transfer of a GlcNAc subunit on undecaprenyl-pyrophosphoryl-MurNAc-pentapeptide (lipid intermediate I) to form undecaprenyl-pyrophosphoryl-MurNAc-(pentapeptide)GlcNAc (lipid intermediate II). The chain is UDP-N-acetylglucosamine--N-acetylmuramyl-(pentapeptide) pyrophosphoryl-undecaprenol N-acetylglucosamine transferase from Mycobacterium sp. (strain KMS).